Reading from the N-terminus, the 359-residue chain is Phosphate acyltransferase (359 aa).

This sequence belongs to the PlsX family. As to quaternary structure, homodimer. Probably interacts with PlsY.

Its subcellular location is the cytoplasm. The catalysed reaction is a fatty acyl-[ACP] + phosphate = an acyl phosphate + holo-[ACP]. Its pathway is lipid metabolism; phospholipid metabolism. Its function is as follows. Catalyzes the reversible formation of acyl-phosphate (acyl-PO(4)) from acyl-[acyl-carrier-protein] (acyl-ACP). This enzyme utilizes acyl-ACP as fatty acyl donor, but not acyl-CoA. The chain is Phosphate acyltransferase from Citrobacter koseri (strain ATCC BAA-895 / CDC 4225-83 / SGSC4696).